We begin with the raw amino-acid sequence, 340 residues long: uncharacterized protein (340 aa).

The first 25 residues, 1-25 (MLGIRAMLVMLDYYWIQLITNNDTR), serve as a signal peptide directing secretion. Topologically, residues 26–225 (SNNTDTIFVS…RRYMYLFSVS (200 aa)) are lumenal. Asparagine 27, asparagine 54, asparagine 57, asparagine 68, asparagine 72, asparagine 78, asparagine 83, asparagine 107, asparagine 118, asparagine 146, asparagine 173, and asparagine 180 each carry an N-linked (GlcNAc...) asparagine; by host glycan. Residues 226–246 (CAGITGTVSIILVSLSLLILI) traverse the membrane as a helical segment. The Cytoplasmic segment spans residues 247–340 (CYYRCGRLLI…PMHMVVCMPA (94 aa)).

It belongs to the HHV-5 UL20 protein family.

The protein resides in the host endoplasmic reticulum membrane. This is an uncharacterized protein from Human cytomegalovirus (strain AD169) (HHV-5).